Consider the following 80-residue polypeptide: Large ribosomal subunit protein bL28 (80 aa).

The interval 1 to 21 (MSRICQITRKKSMKGNSVAHS) is disordered.

It belongs to the bacterial ribosomal protein bL28 family.

This chain is Large ribosomal subunit protein bL28, found in Azobacteroides pseudotrichonymphae genomovar. CFP2.